The sequence spans 252 residues: tRNA (guanine-N(1)-)-methyltransferase (252 aa).

S-adenosyl-L-methionine-binding positions include G113 and 133-138 (IGDYVL).

It belongs to the RNA methyltransferase TrmD family. Homodimer.

It is found in the cytoplasm. The catalysed reaction is guanosine(37) in tRNA + S-adenosyl-L-methionine = N(1)-methylguanosine(37) in tRNA + S-adenosyl-L-homocysteine + H(+). Functionally, specifically methylates guanosine-37 in various tRNAs. The chain is tRNA (guanine-N(1)-)-methyltransferase from Nitrosococcus oceani (strain ATCC 19707 / BCRC 17464 / JCM 30415 / NCIMB 11848 / C-107).